The primary structure comprises 287 residues: Probable phosphite transport system-binding protein PtxB (287 aa).

The N-terminal stretch at methionine 1 to alanine 23 is a signal peptide.

It belongs to the phosphate/phosphite/phosphonate binding protein family.

Its function is as follows. Probably forms part of a binding-protein-dependent phosphite transporter. Required for oxidation of phosphite to phosphate. This Stutzerimonas stutzeri (Pseudomonas stutzeri) protein is Probable phosphite transport system-binding protein PtxB (ptxB).